A 450-amino-acid polypeptide reads, in one-letter code: Alpha-2B adrenergic receptor (450 aa).

Topologically, residues 1-12 are extracellular; sequence MDHQDPYSVQAT. A helical membrane pass occupies residues 13-38; the sequence is AAIAAAITFLILFTIFGNALVILAVL. Topologically, residues 39-48 are cytoplasmic; it reads TSRSLRAPQN. Residues 49-69 form a helical membrane-spanning segment; the sequence is LFLVSLAAADILVATLIIPFS. Residues 70–86 are Extracellular-facing; that stretch reads LANELLGYWYFRRTWCE. Residues Cys-85 and Cys-164 are joined by a disulfide bond. Residues 87 to 107 form a helical membrane-spanning segment; the sequence is VYLALDVLFCTSSIVHLCAIS. The Cytoplasmic segment spans residues 108–128; sequence LDRYWAVSRALEYNSKRTPRR. Residues 129–149 form a helical membrane-spanning segment; that stretch reads IKCIILTVWLIAAVISLPPLI. Over 150–172 the chain is Extracellular; sequence YKGDQGPQPRGRPQCKLNQEAWY. The helical transmembrane segment at 173 to 193 threads the bilayer; it reads ILASSIGSFFAPCLIMILVYL. Over 194–368 the chain is Cytoplasmic; sequence RIYLIAKRSN…RRAQLTREKR (175 aa). 2 disordered regions span residues 204-229 and 241-329; these read RRGP…GGAL and ASAR…PLQQ. The segment covering 246–256 has biased composition (basic and acidic residues); that stretch reads VNGHSKSTGEK. The segment covering 293-311 has biased composition (acidic residues); that stretch reads PEDEAEEEEEEEEEEEECE. A compositionally biased stretch (low complexity) spans 312-326; the sequence is PQAVPVSPASACSPP. A helical transmembrane segment spans residues 369-389; the sequence is FTFVLAVVIGVFVLCWFPFFF. Residues 390 to 405 lie on the Extracellular side of the membrane; it reads SYSLGAICPKHCKVPH. A helical membrane pass occupies residues 406–426; sequence GLFQFFFWIGYCNSSLNPVIY. Residues 427-450 are Cytoplasmic-facing; sequence TIFNQDFRRAFRRILCRPWTQTAW. Cys-442 carries the S-palmitoyl cysteine lipid modification.

The protein belongs to the G-protein coupled receptor 1 family. Adrenergic receptor subfamily. ADRA2B sub-subfamily. In terms of assembly, interacts with RAB26. Interacts with PPP1R9B. Interacts with GGA1, GGA2 and GGA3.

Its subcellular location is the cell membrane. In terms of biological role, alpha-2 adrenergic receptors mediate the catecholamine-induced inhibition of adenylate cyclase through the action of G proteins. The rank order of potency for agonists of this receptor is clonidine &gt; norepinephrine &gt; epinephrine = oxymetazoline &gt; dopamine &gt; p-tyramine = phenylephrine &gt; serotonin &gt; p-synephrine / p-octopamine. For antagonists, the rank order is yohimbine &gt; chlorpromazine &gt; phentolamine &gt; mianserine &gt; spiperone &gt; prazosin &gt; alprenolol &gt; propanolol &gt; pindolol. The polypeptide is Alpha-2B adrenergic receptor (ADRA2B) (Homo sapiens (Human)).